The primary structure comprises 231 residues: Putative aminodeoxychorismate lyase (231 aa).

This sequence belongs to the class-IV pyridoxal-phosphate-dependent aminotransferase family. It depends on pyridoxal 5'-phosphate as a cofactor.

It localises to the cytoplasm. The protein localises to the nucleus. It catalyses the reaction 4-amino-4-deoxychorismate = 4-aminobenzoate + pyruvate + H(+). The protein operates within cofactor biosynthesis; tetrahydrofolate biosynthesis; 4-aminobenzoate from chorismate: step 2/2. Converts 4-amino-4-deoxychorismate into 4-aminobenzoate (PABA) and pyruvate. The polypeptide is Putative aminodeoxychorismate lyase (Schizosaccharomyces pombe (strain 972 / ATCC 24843) (Fission yeast)).